The chain runs to 206 residues: Large ribosomal subunit protein uL4 (206 aa).

A disordered region spans residues 44-78 (RSGNRAQKDREQVKHTTKKPWRQKGTGRARAGMSS). Basic residues predominate over residues 58-70 (HTTKKPWRQKGTG).

Belongs to the universal ribosomal protein uL4 family. In terms of assembly, part of the 50S ribosomal subunit.

In terms of biological role, one of the primary rRNA binding proteins, this protein initially binds near the 5'-end of the 23S rRNA. It is important during the early stages of 50S assembly. It makes multiple contacts with different domains of the 23S rRNA in the assembled 50S subunit and ribosome. Functionally, forms part of the polypeptide exit tunnel. The sequence is that of Large ribosomal subunit protein uL4 from Paraburkholderia phytofirmans (strain DSM 17436 / LMG 22146 / PsJN) (Burkholderia phytofirmans).